The sequence spans 1146 residues: Ankyrin repeat domain-containing protein 24 (1146 aa).

ANK repeat units lie at residues 81 to 110, 114 to 143, 147 to 176, 180 to 209, and 213 to 242; these read EGKSAFHLAAMRGAASCLEVMIAHGSNVMS, AGYNALHLAAKYGHPQCLKQLLQASCVVDV, SGWTALHHAAAGGCLSCSEVLCSFKAHLNP, SGATPLIIAAQMCHTDLCRLLLQQGAAAND, and QGRTALMLACEGASPETVEVLLQGGAQPGI. Disordered stretches follow at residues 272-320, 607-627, and 766-785; these read RPSP…PDDR, REMETTEEEANMETKPTGAQA, and ERVREAEGSGASGGGGGDTT. The span at 286 to 297 shows a compositional bias: polar residues; it reads EASSQNSMSSHG. Residues 320–517 adopt a coiled-coil conformation; it reads RDAYEEIVRL…QALRQQETRE (198 aa). Residues 714 to 1110 adopt a coiled-coil conformation; the sequence is AAEASEKLQV…AARDHSSVVA (397 aa).

As to quaternary structure, homodimer. Interacts (via C-terminal domain) with TRIOBP (via C-terminal domain) isoform 4; recruits TRIOBP isoform 4 to stereocilia rootlets.

It localises to the cell membrane. Its subcellular location is the cell projection. The protein resides in the stereocilium. In terms of biological role, component of the stereocilia rootlet in hair cells of inner ear. Bridges the apical plasma membrane with the lower rootlet and maintains normal distribution of TRIOBP, thereby reinforcing stereocilia insertion points and organizing rootlets for hearing with long-term resilience. In Homo sapiens (Human), this protein is Ankyrin repeat domain-containing protein 24.